The sequence spans 1004 residues: Kinesin-like protein KIN-14R (1004 aa).

Disordered regions lie at residues 1 to 21 (MEEE…RIGD), 61 to 90 (PYVD…MQHD), and 110 to 169 (ELFS…ATMG). Residues 63–75 (VDDDDDGNSEEEN) show a composition bias toward acidic residues. Pro residues predominate over residues 115 to 125 (PSPPQGPPSPS). 2 coiled-coil regions span residues 189-230 (CGQL…AQAS) and 266-338 (LNDL…LYNK). The 327-residue stretch at 345–671 (NIRVFCRCRP…LNFASRVRGI (327 aa)) folds into the Kinesin motor domain. An ATP-binding site is contributed by 428 to 435 (GQTGTGKT). Residues 691 to 742 (MAGRAKQDSKNKDAQIKSMEETIQSLEAKNKAKDLLTMNLQEKIKELEAQLL) are a coiled coil. 2 disordered regions span residues 759 to 791 (DHLH…STAE) and 946 to 1004 (SGRR…RQLN). Residues 948–958 (RRAGAGVAGTT) show a composition bias toward low complexity. Over residues 995–1004 (NNGTSLRQLN) the composition is skewed to polar residues.

This sequence belongs to the TRAFAC class myosin-kinesin ATPase superfamily. Kinesin family. KIN-14 subfamily.

In Oryza sativa subsp. japonica (Rice), this protein is Kinesin-like protein KIN-14R.